The chain runs to 84 residues: Cell division topological specificity factor (84 aa).

The protein belongs to the MinE family.

Its function is as follows. Prevents the cell division inhibition by proteins MinC and MinD at internal division sites while permitting inhibition at polar sites. This ensures cell division at the proper site by restricting the formation of a division septum at the midpoint of the long axis of the cell. This chain is Cell division topological specificity factor, found in Ectopseudomonas mendocina (strain ymp) (Pseudomonas mendocina).